Reading from the N-terminus, the 259-residue chain is Src-like-adapter 2 (259 aa).

Residues methionine 1–proline 20 are compositionally biased toward low complexity. Residues methionine 1–glutamate 30 form a disordered region. Residue glycine 2 is the site of N-myristoyl glycine attachment. The 61-residue stretch at arginine 31 to histidine 91 folds into the SH3 domain. In terms of domain architecture, SH2 spans tryptophan 93 to cysteine 190. Positions cysteine 190–alanine 259 are SLA C-terminal.

In terms of assembly, interacts (via its C-terminal domain) with CBL (phosphorylated). Interacts (via SH2 domain) with ZAP70 (phosphorylated) and CD3Z (phosphorylated). Interacts (via SH2 domain) with CSF1R (phosphorylated). Post-translationally, phosphorylated by CSF1R. In terms of tissue distribution, mainly expressed in immune system. Highly expressed in spleen and thymus and expressed at intermediate levels in lung. Not expressed in liver, heart and brain. Isoform 1 is predominant in lung and spleen, while isoform 2 is predominant in thymus.

Its subcellular location is the cytoplasm. The protein resides in the cell membrane. The protein localises to the cytoplasmic vesicle. It is found in the late endosome. Its function is as follows. Adapter protein, which negatively regulates T-cell receptor (TCR) signaling. Inhibits T-cell antigen-receptor induced activation of nuclear factor of activated T-cells. May act by linking signaling proteins such as ZAP70 with CBL, leading to a CBL dependent degradation of signaling proteins. This is Src-like-adapter 2 (Sla2) from Mus musculus (Mouse).